The chain runs to 293 residues: B1-hordein (293 aa).

Positions 1–19 are cleaved as a signal peptide; it reads MKTFLIFALLAIAATSTIA. Residues 20 to 90 are disordered; the sequence is QQQPFPQQPI…PPFWQQKPFP (71 aa). Over residues 25–81 the composition is skewed to pro residues; that stretch reads PQQPIPQQPQPYPQQPQPYPQQPFPPQQPFPQQPVPQQPQPYPQQPFPPQQPFPQQP.

This sequence belongs to the gliadin/glutenin family. Developing endosperm.

In terms of biological role, sulfur-rich seed storage protein. The sequence is that of B1-hordein from Hordeum vulgare (Barley).